We begin with the raw amino-acid sequence, 510 residues long: Glycerol kinase (510 aa).

Threonine 13 is a binding site for ADP. Residues threonine 13 and threonine 14 each contribute to the ATP site. Threonine 13 serves as a coordination point for sn-glycerol 3-phosphate. Arginine 17 contributes to the ADP binding site. Positions 83, 84, 135, and 255 each coordinate sn-glycerol 3-phosphate. Arginine 83, glutamate 84, tyrosine 135, aspartate 255, and glutamine 256 together coordinate glycerol. The ADP site is built by threonine 277, glycine 321, glycine 421, and asparagine 425. The ATP site is built by threonine 277, glycine 321, and glycine 421.

Belongs to the FGGY kinase family.

It carries out the reaction glycerol + ATP = sn-glycerol 3-phosphate + ADP + H(+). It functions in the pathway polyol metabolism; glycerol degradation via glycerol kinase pathway; sn-glycerol 3-phosphate from glycerol: step 1/1. Key enzyme in the regulation of glycerol uptake and metabolism. Catalyzes the phosphorylation of glycerol to yield sn-glycerol 3-phosphate. The protein is Glycerol kinase of Halobacterium salinarum (strain ATCC 29341 / DSM 671 / R1).